A 491-amino-acid chain; its full sequence is FAD-dependent monooxygenase idtM (491 aa).

FAD-binding residues include glutamate 34, glycine 48, arginine 107, aspartate 307, and alanine 320. A helical membrane pass occupies residues 448 to 468; the sequence is ILSLVYVVAGLAMMYMSIYLV.

The protein belongs to the paxM FAD-dependent monooxygenase family. The cofactor is FAD.

The protein resides in the membrane. Its pathway is secondary metabolite biosynthesis. In terms of biological role, FAD-dependent monooxygenase; part of the gene cluster that mediates the biosynthesis of paspalitrems, indole-diterpene (IDT) mycotoxins that are potent tremorgens in mammals. The geranylgeranyl diphosphate (GGPP) synthase idtG is proposed to catalyze the first step in IDT biosynthesis via catalysis of a series of iterative condensations of isopentenyl diphosphate (IPP) with dimethylallyl diphosphate (DMAPP), geranyl diphosphate (GPP), and farnesyl diphosphate (FPP), to form GGPP. Condensation of indole-3-glycerol phosphate with GGPP by the prenyltransferase idtC then forms 3-geranylgeranylindole (3-GGI). Epoxidation of the two terminal alkenes of the geranylgeranyl moiety by the FAD-dependent monooxygenase idtM, and cyclization by the terpene cyclase idtB then leads to the production of paspaline. The cytochrome P450 monooxygenase idtP then catalyzes oxidative elimination of the pendant methyl group at C-12 of paspaline and generates the C-10 ketone to yield 13-desoxypaxilline. The cytochrome P450 monooxygenase idtQ may catalyze the C-13 oxidation of 13-desoxypaxilline to afford paxilline. Considering that both paspalicine and paxilline were detected in C.paspali, idtQ also catalyzes the formation of paspalinine from 13-desoxypaxilline via paspalicine as an intermediate. Finally, the alpha-prenyltransferase idtF prenylates paspalinine at the C-20 or the C-21 positions to yield paspalitrems A and C, respectively. The hydroxylation of paspalitrem A at C-32 by a still unknown oxidase affords paspalitrem B. The sequence is that of FAD-dependent monooxygenase idtM from Claviceps paspali (Rye ergot fungus).